We begin with the raw amino-acid sequence, 413 residues long: Alpha-1-antiproteinase (413 aa).

A signal peptide spans 1-24 (MTPSISWRLLLLAGLCCLVPSYLA). Ser-33 is modified (phosphoserine). N-linked (GlcNAc...) asparagine glycans are attached at residues Asn-64, Asn-101, and Asn-265. The RCL stretch occupies residues 368-387 (ATTIVEAVFMSLPPILHFNH). At Ser-378 the chain carries Phosphoserine.

Belongs to the serpin family. In terms of assembly, interacts with CELA2A. Interacts with ERGIC3 and LMAN1/ERGIC53. Interacts with PRSS1/Trypsin.

It is found in the secreted. Inhibitor of serine proteases. The primary target is elastase, but also has a moderate affinity for plasmin and thrombin. This Mus saxicola (Brown spiny mouse) protein is Alpha-1-antiproteinase (Serpina1).